A 250-amino-acid polypeptide reads, in one-letter code: Large ribosomal subunit protein uL29m (250 aa).

The transit peptide at 1-24 (MRPGAASIRTTGSVLAFLVPSAQC) directs the protein to the mitochondrion. Positions 66 to 86 (VLSKKGSGDQPPKPVPITEKV) are disordered.

This sequence belongs to the universal ribosomal protein uL29 family. In terms of assembly, component of the mitochondrial large ribosomal subunit. Mature mitochondrial ribosomes consist of a small (37S) and a large (54S) subunit. The 37S subunit contains at least 33 different proteins and 1 molecule of RNA (15S). The 54S subunit contains at least 45 different proteins and 1 molecule of RNA (21S).

It localises to the mitochondrion. The protein is Large ribosomal subunit protein uL29m (MRPL4) of Phaeosphaeria nodorum (strain SN15 / ATCC MYA-4574 / FGSC 10173) (Glume blotch fungus).